The chain runs to 306 residues: ClpXP adapter protein SpxH (306 aa).

It belongs to the SpxH family. As to quaternary structure, interacts with Spx.

It localises to the cytoplasm. Adapter protein required for efficient degradation of Spx by ClpXP under non-stress conditions. Interaction with Spx stabilizes Spx and exposes the C-terminus of Spx for recognition and proteolysis by ClpXP. This is ClpXP adapter protein SpxH from Halalkalibacterium halodurans (strain ATCC BAA-125 / DSM 18197 / FERM 7344 / JCM 9153 / C-125) (Bacillus halodurans).